Reading from the N-terminus, the 611-residue chain is Leukotriene A-4 hydrolase (611 aa).

Lysine 73 carries the N6-acetyllysine modification. A peptide contacts are provided by residues 135-137 and 267-272; these read QCQ and PYGGME. Histidine 296 lines the Zn(2+) pocket. Catalysis depends on glutamate 297, which acts as the Proton acceptor. Zn(2+) contacts are provided by histidine 300 and glutamate 319. Lysine 337 bears the N6-acetyllysine mark. The active-site Proton donor is tyrosine 384. Position 414 is an N6-acetyllysine (lysine 414). A Phosphoserine modification is found at serine 416. Position 564 to 566 (564 to 566) interacts with a peptide; sequence RMK. Lysine 573 carries the N6-acetyllysine modification.

This sequence belongs to the peptidase M1 family. As to quaternary structure, monomer. It depends on Zn(2+) as a cofactor. Phosphorylation at Ser-416 inhibits leukotriene-A4 hydrolase activity. activity.

The protein localises to the cytoplasm. It catalyses the reaction leukotriene A4 + H2O = leukotriene B4. The enzyme catalyses (5S,6S)-epoxy-(18R)-hydroxy-(7E,9E,11Z,14Z,16E)-eicosapentaenoate + H2O = resolvin E1. It carries out the reaction (5S,6S)-epoxy-(18S)-hydroxy-(7E,9E,11Z,14Z,16E)-eicosapentaenoate + H2O = 18S-resolvin E1. The catalysed reaction is Release of the N-terminal residue from a tripeptide.. It functions in the pathway lipid metabolism; leukotriene B4 biosynthesis. Inhibited by bestatin. The epoxide hydrolase activity is restrained by suicide inactivation that involves binding of LTA4 to Tyr-379. 4-(4-benzylphenyl)thiazol-2-amine (ARM1) selectively inhibits the epoxide hydrolase activity. In terms of biological role, bifunctional zinc metalloenzyme that comprises both epoxide hydrolase (EH) and aminopeptidase activities. Acts as an epoxide hydrolase to catalyze the conversion of LTA4 to the pro-inflammatory mediator leukotriene B4 (LTB4). Also has aminopeptidase activity, with high affinity for N-terminal arginines of various synthetic tripeptides. In addition to its pro-inflammatory EH activity, may also counteract inflammation by its aminopeptidase activity, which inactivates by cleavage another neutrophil attractant, the tripeptide Pro-Gly-Pro (PGP), a bioactive fragment of collagen generated by the action of matrix metalloproteinase-9 (MMP9) and prolylendopeptidase (PREPL). Involved also in the biosynthesis of resolvin E1 and 18S-resolvin E1 from eicosapentaenoic acid, two lipid mediators that show potent anti-inflammatory and pro-resolving actions. The polypeptide is Leukotriene A-4 hydrolase (LTA4H) (Bos taurus (Bovine)).